Here is a 209-residue protein sequence, read N- to C-terminus: Guanylate kinase (209 aa).

The Guanylate kinase-like domain maps to 5-184 (GLLIVFSGPS…AAERVKRVIE (180 aa)). 12 to 19 (GPSGVGKG) serves as a coordination point for ATP.

Belongs to the guanylate kinase family.

It is found in the cytoplasm. It catalyses the reaction GMP + ATP = GDP + ADP. Its function is as follows. Essential for recycling GMP and indirectly, cGMP. This Streptococcus agalactiae serotype Ia (strain ATCC 27591 / A909 / CDC SS700) protein is Guanylate kinase.